Here is a 304-residue protein sequence, read N- to C-terminus: Hairy/enhancer-of-split related with YRPW motif protein 1 (304 aa).

Residues 1-52 are disordered; it reads MKRAHPDYSSSDSELDETVEVEKESADENGNLSSALGSMSPTTSSQILARKR. Over residues 28–47 the composition is skewed to polar residues; sequence ENGNLSSALGSMSPTTSSQI. The transcriptional repression and interaction with NCOR1 and SIN3A stretch occupies residues 48–117; that stretch reads LARKRRRGII…GGKGYFDAHA (70 aa). One can recognise a bHLH domain in the interval 49–104; sequence ARKRRRGIIEKRRRDRINNSLSELRRLVPSAFEKQGSAKLEKAEILQMTVDHLKML. The Orange domain occupies 122–158; it reads YRSLGFRECLAEVARYLSIIEGLDASDPLRVRLVSHL. A disordered region spans residues 191 to 234; that stretch reads AHPLLLPQSGHGNTGTSASPTDPHHQGRLAAAHPEAPALRAPPS. Residues 200 to 210 show a composition bias toward polar residues; the sequence is GHGNTGTSASP. A compositionally biased stretch (low complexity) spans 218–234; the sequence is RLAAAHPEAPALRAPPS.

The protein belongs to the HEY family. Self-associates. Interacts with HES1 and HEYL. Interacts with HDAC1, NCOR1 and SIN3A. Interacts with GATA4 and GATA6. Interacts with CCDC89/BOIP.

The protein resides in the nucleus. Transcriptional repressor which binds preferentially to the canonical E box sequence 5'-CACGTG-3'. Downstream effector of Notch signaling required for cardiovascular development. Specifically required for the Notch-induced endocardial epithelial to mesenchymal transition, which is itself criticial for cardiac valve and septum development. May be required in conjunction with HEY2 to specify arterial cell fate or identity. Promotes maintenance of neuronal precursor cells and glial versus neuronal fate specification. Represses transcription by the cardiac transcriptional activators GATA4 and GATA6 and by the neuronal bHLH factors ASCL1/MASH1 and NEUROD4/MATH3. The protein is Hairy/enhancer-of-split related with YRPW motif protein 1 (HEY1) of Canis lupus familiaris (Dog).